The sequence spans 1030 residues: Probable serine/threonine-protein kinase SIS8 (1030 aa).

2 stretches are compositionally biased toward polar residues: residues 44-58 (PNQS…STTK) and 399-419 (YSAS…NGIE). 4 disordered regions span residues 44–84 (PNQS…PEIK), 399–474 (YSAS…KAPF), 555–625 (TVES…ASST), and 689–736 (LGSN…SDCD). Composition is skewed to basic and acidic residues over residues 426-435 (TEFRTGEHRS), 458-471 (ISRE…KVEK), and 560-580 (NSTE…EGRH). Positions 613 to 625 (SQSDSSHSEASST) are enriched in low complexity. The Protein kinase domain maps to 748 to 1003 (ITVGERIGLG…AEIMASLKRL (256 aa)). ATP is bound by residues 754–762 (IGLGSYGEV) and lysine 775. Aspartate 871 functions as the Proton acceptor in the catalytic mechanism. Residues 1007–1023 (VTGSNIPRPVPSSSSLP) are compositionally biased toward polar residues. Residues 1007–1030 (VTGSNIPRPVPSSSSLPTEHEQKD) are disordered.

Belongs to the protein kinase superfamily. Ser/Thr protein kinase family. Interacts with UGT72E1. As to expression, expressed roots, rosette and cauline leaves, and at lower levels in flowers and siliques.

It localises to the nucleus. The enzyme catalyses L-seryl-[protein] + ATP = O-phospho-L-seryl-[protein] + ADP + H(+). It catalyses the reaction L-threonyl-[protein] + ATP = O-phospho-L-threonyl-[protein] + ADP + H(+). In terms of biological role, acts as a negative regulator of salt tolerance. Mediates sugar response during early seedling development. The chain is Probable serine/threonine-protein kinase SIS8 from Arabidopsis thaliana (Mouse-ear cress).